The sequence spans 284 residues: Tropomyosin alpha-1 chain (284 aa).

A disordered region spans residues 1-40; that stretch reads MDAIKKKMQMLKLDKENALDRAEQAEADKKGAEDKSKQLE. Positions 1-284 form a coiled coil; it reads MDAIKKKMQM…DHALNDMTSI (284 aa). Basic and acidic residues predominate over residues 12 to 40; that stretch reads KLDKENALDRAEQAEADKKGAEDKSKQLE.

The protein belongs to the tropomyosin family. In terms of assembly, homodimer. Heterodimer of an alpha (TPM1, TPM3 or TPM4) and a beta (TPM2) chain.

The protein resides in the cytoplasm. The protein localises to the cytoskeleton. Its function is as follows. Binds to actin filaments in muscle and non-muscle cells. Plays a central role, in association with the troponin complex, in the calcium dependent regulation of vertebrate striated muscle contraction. Smooth muscle contraction is regulated by interaction with caldesmon. In non-muscle cells is implicated in stabilizing cytoskeleton actin filaments. The protein is Tropomyosin alpha-1 chain (tpm1) of Rana temporaria (European common frog).